We begin with the raw amino-acid sequence, 355 residues long: MASKDQHLQQKVKHTLEAIPSPRYAPLRVPLRRRLQTLAVLLWCSMMSICMFIFFFLCSIPVLLWFPIILYLTWILVWDKAPENGGRPIRWLRNAAWWKLFAGYFPAHVIKEADLDPSKNYIFGYHPHGIISMGSFCTFSTNATGFDDLFPGIRPSLLTLTSNFNIPLYRDYLMACGLCSVSKTSCQNILTKGGPGRSIAIVVGGASESLNARPGVMDLVLKRRFGFIKIAVQTGASLVPTISFGENELYEQIESNENSKLHRWQKKIQHALGFTMPLFHGRGVFNYDFGLLPHRHPIYTIVGKPIPVPSIKYGQTKDEIIRELHDSYMHAVQDLYDRYKDIYAKDRVKELEFVE.

Helical transmembrane passes span 41 to 61 and 62 to 78; these read LLWC…CSIP and VLLW…ILVW. N-linked (GlcNAc...) asparagine glycosylation occurs at N142.

This sequence belongs to the diacylglycerol acyltransferase family.

The protein localises to the endoplasmic reticulum membrane. It carries out the reaction an acyl-CoA + a 1,2-diacyl-sn-glycerol = a triacyl-sn-glycerol + CoA. Its pathway is glycerolipid metabolism; triacylglycerol biosynthesis. Functionally, catalyzes the terminal and only committed step in triacylglycerol synthesis by using diacylglycerol and fatty acyl CoA as substrates. Required for storage lipid synthesis. This is Diacylglycerol O-acyltransferase 2A (DGAT2A) from Umbelopsis ramanniana (Oleaginous fungus).